A 419-amino-acid polypeptide reads, in one-letter code: Prolyl hydroxylase EGLN2 (419 aa).

Low complexity-rich tracts occupy residues 1 to 18 and 64 to 73; these read MDSP…PQLP and TTATATTTTA. Disordered stretches follow at residues 1-89 and 108-181; these read MDSP…GELW and AAQG…REEV. Residues 89-134 carry the Bipartite nuclear localization signal motif; sequence WPLQSEGAAALVTKECQRLAAQGARPEAPKRKWAKDGGDAPSPSKR. The segment covering 115 to 126 has biased composition (basic and acidic residues); the sequence is EAPKRKWAKDGG. A Phosphoserine modification is found at Ser-130. Positions 154–174 are enriched in low complexity; sequence SGASNSSSSSSNTTSSSGEAS. The beta(2)beta(3) 'finger-like' loop stretch occupies residues 237–247; the sequence is VSQRAIPPRSI. The region spanning 290 to 388 is the Fe2OG dioxygenase domain; the sequence is GRTKAMVACY…RYAITVWYFD (99 aa). Residues His-309, Asp-311, and His-370 each contribute to the Fe cation site. Arg-379 is a 2-oxoglutarate binding site.

As to quaternary structure, interacts with E3 ligase SIAH2. Interacts with LIMD1, WTIP and AJUBA. The cofactor is Fe(2+). L-ascorbate is required as a cofactor. Ubiquitinated by SIAH1 and/or SIAH2 in response to the unfolded protein response (UPR), leading to its degradation. As to expression, highly expressed in testis, expression was also detected in the heart brain, liver kidney and lung. Expression was lowest in spleen and skeletal muscle. Constitutively expressed during differentiation of C2C12 skeletal myocytes.

It localises to the nucleus. The enzyme catalyses L-prolyl-[protein] + 2-oxoglutarate + O2 = trans-4-hydroxy-L-prolyl-[protein] + succinate + CO2. It carries out the reaction L-prolyl-[hypoxia-inducible factor alpha subunit] + 2-oxoglutarate + O2 = trans-4-hydroxy-L-prolyl-[hypoxia-inducible factor alpha subunit] + succinate + CO2. Prolyl hydroxylase that mediates hydroxylation of proline residues in target proteins, such as ATF4, IKBKB, CEP192 and HIF1A. Target proteins are preferentially recognized via a LXXLAP motif. Cellular oxygen sensor that catalyzes, under normoxic conditions, the post-translational formation of 4-hydroxyproline in hypoxia-inducible factor (HIF) alpha proteins. Hydroxylates a specific proline found in each of the oxygen-dependent degradation (ODD) domains (N-terminal, NODD, and C-terminal, CODD) of HIF1A. Also hydroxylates HIF2A. Has a preference for the CODD site for both HIF1A and HIF2A. Hydroxylated HIFs are then targeted for proteasomal degradation via the von Hippel-Lindau ubiquitination complex. Under hypoxic conditions, the hydroxylation reaction is attenuated allowing HIFs to escape degradation resulting in their translocation to the nucleus, heterodimerization with HIF1B, and increased expression of hypoxy-inducible genes. EGLN2 is involved in regulating hypoxia tolerance and apoptosis in cardiac and skeletal muscle. Also regulates susceptibility to normoxic oxidative neuronal death. Links oxygen sensing to cell cycle and primary cilia formation by hydroxylating the critical centrosome component CEP192 which promotes its ubiquitination and subsequent proteasomal degradation. Hydroxylates IKBKB, mediating NF-kappa-B activation in hypoxic conditions. Also mediates hydroxylation of ATF4, leading to decreased protein stability of ATF4. In Mus musculus (Mouse), this protein is Prolyl hydroxylase EGLN2.